The primary structure comprises 742 residues: 5-methyltetrahydropteroyltriglutamate--homocysteine methyltransferase (742 aa).

5-methyltetrahydropteroyltri-L-glutamate contacts are provided by residues 18–21 (REWK) and K112. L-homocysteine contacts are provided by residues 420-422 (IGS) and E473. L-methionine contacts are provided by residues 420-422 (IGS) and E473. Residue W550 coordinates 5-methyltetrahydropteroyltri-L-glutamate. D588 is a binding site for L-homocysteine. D588 contributes to the L-methionine binding site. E594 provides a ligand contact to 5-methyltetrahydropteroyltri-L-glutamate. Residues H630, C632, and E654 each contribute to the Zn(2+) site. The Proton donor role is filled by H683. C715 contacts Zn(2+).

Belongs to the vitamin-B12 independent methionine synthase family. Zn(2+) serves as cofactor.

The enzyme catalyses 5-methyltetrahydropteroyltri-L-glutamate + L-homocysteine = tetrahydropteroyltri-L-glutamate + L-methionine. It functions in the pathway amino-acid biosynthesis; L-methionine biosynthesis via de novo pathway; L-methionine from L-homocysteine (MetE route): step 1/1. In terms of biological role, catalyzes the transfer of a methyl group from 5-methyltetrahydrofolate to homocysteine resulting in methionine formation. The protein is 5-methyltetrahydropteroyltriglutamate--homocysteine methyltransferase of Staphylococcus aureus (strain USA300).